Reading from the N-terminus, the 357-residue chain is tRNA pseudouridine synthase D (357 aa).

The active-site Nucleophile is the Asp76. One can recognise a TRUD domain in the interval 151–331; the sequence is GMPNYFGYQR…DGRYKDEEAQ (181 aa).

The protein belongs to the pseudouridine synthase TruD family.

It catalyses the reaction uridine(13) in tRNA = pseudouridine(13) in tRNA. In terms of biological role, responsible for synthesis of pseudouridine from uracil-13 in transfer RNAs. The polypeptide is tRNA pseudouridine synthase D (Sulfurimonas denitrificans (strain ATCC 33889 / DSM 1251) (Thiomicrospira denitrificans (strain ATCC 33889 / DSM 1251))).